Consider the following 76-residue polypeptide: Protein OPG128 (76 aa).

C17 and C21 are disulfide-bonded.

This sequence belongs to the orthopoxvirus OPG128 family. In terms of assembly, interacts with sulfhydryl oxidase OPG072; this interaction involves formation of a transient disulfide-bonded intermediate, allowing disulfide bond transfer. Interacts with OPG088; this interaction involves formation of a transient disulfide-bonded intermediate, allowing disulfide bond transfer.

Functionally, late protein which probably participates in disulfide bond formation by functioning as a thiol-disulfide transfer protein between membrane-associated OPG072 and OPG08. The complete pathway for formation of disulfide bonds in intracellular virion membrane proteins sequentially involves oxidation of OPG072, OPG128 and OPG08. In Bos taurus (Bovine), this protein is Protein OPG128 (OPG128).